A 318-amino-acid polypeptide reads, in one-letter code: tRNA-cytidine(32) 2-sulfurtransferase (318 aa).

A disordered region spans residues 1 to 29 (MNHVSSTKPDTAPSKHLTSSHIDATDQNN). A compositionally biased stretch (polar residues) spans 16–27 (HLTSSHIDATDQ). The PP-loop motif signature appears at 64–69 (SGGKDS). The [4Fe-4S] cluster site is built by Cys-139, Cys-142, and Cys-230.

It belongs to the TtcA family. As to quaternary structure, homodimer. It depends on Mg(2+) as a cofactor. Requires [4Fe-4S] cluster as cofactor.

It is found in the cytoplasm. The enzyme catalyses cytidine(32) in tRNA + S-sulfanyl-L-cysteinyl-[cysteine desulfurase] + AH2 + ATP = 2-thiocytidine(32) in tRNA + L-cysteinyl-[cysteine desulfurase] + A + AMP + diphosphate + H(+). It participates in tRNA modification. Its function is as follows. Catalyzes the ATP-dependent 2-thiolation of cytidine in position 32 of tRNA, to form 2-thiocytidine (s(2)C32). The sulfur atoms are provided by the cysteine/cysteine desulfurase (IscS) system. The polypeptide is tRNA-cytidine(32) 2-sulfurtransferase (Pseudoalteromonas atlantica (strain T6c / ATCC BAA-1087)).